We begin with the raw amino-acid sequence, 508 residues long: Photosystem II CP47 reaction center protein (508 aa).

The next 6 helical transmembrane spans lie at 21-36, 101-115, 140-156, 203-218, 237-252, and 457-472; these read SVHIMHTALVAGWAGS, IVFSGLCFLAAIWHW, GIHLFLAGVACFGFGAF, IAAGTLGILAGLFHLS, VLSSSIAAVFFAAFVV, and SFALLFFFGHIWHGAR.

The protein belongs to the PsbB/PsbC family. PsbB subfamily. PSII is composed of 1 copy each of membrane proteins PsbA, PsbB, PsbC, PsbD, PsbE, PsbF, PsbH, PsbI, PsbJ, PsbK, PsbL, PsbM, PsbT, PsbX, PsbY, PsbZ, Psb30/Ycf12, at least 3 peripheral proteins of the oxygen-evolving complex and a large number of cofactors. It forms dimeric complexes. Binds multiple chlorophylls. PSII binds additional chlorophylls, carotenoids and specific lipids. is required as a cofactor.

The protein resides in the plastid. The protein localises to the chloroplast thylakoid membrane. Functionally, one of the components of the core complex of photosystem II (PSII). It binds chlorophyll and helps catalyze the primary light-induced photochemical processes of PSII. PSII is a light-driven water:plastoquinone oxidoreductase, using light energy to abstract electrons from H(2)O, generating O(2) and a proton gradient subsequently used for ATP formation. In Panax ginseng (Korean ginseng), this protein is Photosystem II CP47 reaction center protein.